We begin with the raw amino-acid sequence, 190 residues long: Transcription termination/antitermination protein NusG (190 aa).

One can recognise a KOW domain in the interval 141-165; the sequence is GDMVRVTSGPFADFSGVVSEVNAPQ.

This sequence belongs to the NusG family.

Its function is as follows. Participates in transcription elongation, termination and antitermination. The protein is Transcription termination/antitermination protein NusG of Deinococcus radiodurans (strain ATCC 13939 / DSM 20539 / JCM 16871 / CCUG 27074 / LMG 4051 / NBRC 15346 / NCIMB 9279 / VKM B-1422 / R1).